The following is a 176-amino-acid chain: Trypsin inhibitor 1B (176 aa).

Intrachain disulfides connect C39/C83 and C132/C143.

This sequence belongs to the protease inhibitor I3 (leguminous Kunitz-type inhibitor) family.

Functionally, inhibits trypsin stoichiometrically. The protein is Trypsin inhibitor 1B of Erythrina variegata (Indian coral tree).